We begin with the raw amino-acid sequence, 521 residues long: uncharacterized protein (521 aa).

Transmembrane regions (helical) follow at residues 103–123, 136–156, 177–197, 200–220, 259–279, 299–319, 327–346, 358–378, 411–431, and 450–470; these read NLML…VPMP, FWFF…LWIT, YILF…FTAW, ITFT…GISF, AYAH…VYIV, IMYV…SSWI, YALV…VYVR, FVLV…LITM, CVAS…LHFG, and FKLT…ASYL.

It localises to the membrane. This is an uncharacterized protein from Schizosaccharomyces pombe (strain 972 / ATCC 24843) (Fission yeast).